We begin with the raw amino-acid sequence, 557 residues long: Probable tRNA-splicing endonuclease subunit tsp-5 (557 aa).

Disordered stretches follow at residues 1–36 (MPLDDDLEDNPSLVPPPSTTTTSSNATGDAATMMDE), 131–152 (KLTKRGKEGAGEDDEEEKDRKL), 225–252 (SVPAAAAATTSAKGEGEQRTEEDEEDDD), 370–403 (PSSTSSSASPTADNQPQKPQSPESDESDSGSDSP), and 514–557 (SGGP…GRGN). A compositionally biased stretch (basic and acidic residues) spans 131 to 140 (KLTKRGKEGA). The span at 370–381 (PSSTSSSASPTA) shows a compositional bias: low complexity. 2 stretches are compositionally biased toward gly residues: residues 517–527 (PRRGGGGGGKK) and 538–549 (GRGGGRGGGRGG).

This sequence belongs to the SEN54 family. TRNA splicing endonuclease is a heterotetramer composed of tsp-2/sen2, tsp-1/sen15, tsp-4/sen34 and tsp-5/sen54. Interacts directly with tsp-2/sen2.

Functionally, non-catalytic subunit of the tRNA-splicing endonuclease complex, a complex responsible for identification and cleavage of the splice sites in pre-tRNA. It cleaves pre-tRNA at the 5' and 3' splice sites to release the intron. The products are an intron and two tRNA half-molecules bearing 2',3' cyclic phosphate and 5'-OH termini. There are no conserved sequences at the splice sites, but the intron is invariably located at the same site in the gene, placing the splice sites an invariant distance from the constant structural features of the tRNA body. May be required to embody the molecular ruler of the complex. The chain is Probable tRNA-splicing endonuclease subunit tsp-5 (tsp-5) from Neurospora crassa (strain ATCC 24698 / 74-OR23-1A / CBS 708.71 / DSM 1257 / FGSC 987).